The chain runs to 345 residues: MTTATISLSTLQASRPSVAARADAAARWRVADVEALYALPFMDLLFQAQQVHRAHFDANEVQLSTLLSIKTGGCAEDCGYCPQSAHFDTAVEASKLMPIDEVLDAANAAKAQGATRFCMGAAWRSPKERDMERVTEMVREVRALGLETCMTLGMLDGEQARELKDAGLDYYNHNLDSAPDFYGQVISTRTYQDRLDTLGNVRDAGINVCCGGIVGMGESRTQRAGLIAQLANLSPYPESVPINNLVPVPGTPLADAEPIDPFEFVRTIAVARITMPTTMVRLSAGREQMDEALQALCFAAGANSIFYGDKLLTTSNPQAARDRALFERLGLRVQGERPAVRTSDN.

In terms of domain architecture, Radical SAM core spans 59-286 (NEVQLSTLLS…TTMVRLSAGR (228 aa)). [4Fe-4S] cluster contacts are provided by C74, C78, and C81. [2Fe-2S] cluster contacts are provided by C118, C149, C209, and R281.

This sequence belongs to the radical SAM superfamily. Biotin synthase family. As to quaternary structure, homodimer. [4Fe-4S] cluster is required as a cofactor. Requires [2Fe-2S] cluster as cofactor.

The catalysed reaction is (4R,5S)-dethiobiotin + (sulfur carrier)-SH + 2 reduced [2Fe-2S]-[ferredoxin] + 2 S-adenosyl-L-methionine = (sulfur carrier)-H + biotin + 2 5'-deoxyadenosine + 2 L-methionine + 2 oxidized [2Fe-2S]-[ferredoxin]. It functions in the pathway cofactor biosynthesis; biotin biosynthesis; biotin from 7,8-diaminononanoate: step 2/2. In terms of biological role, catalyzes the conversion of dethiobiotin (DTB) to biotin by the insertion of a sulfur atom into dethiobiotin via a radical-based mechanism. This chain is Biotin synthase, found in Leptothrix cholodnii (strain ATCC 51168 / LMG 8142 / SP-6) (Leptothrix discophora (strain SP-6)).